We begin with the raw amino-acid sequence, 527 residues long: Berberine bridge enzyme-like 10 (527 aa).

Positions 1–20 are cleaved as a signal peptide; it reads MEKLLVISLLLLISTSVTTS. Cysteine 32 and cysteine 95 are disulfide-bonded. Residue asparagine 53 is glycosylated (N-linked (GlcNAc...) asparagine). Residues 73 to 248 enclose the FAD-binding PCMH-type domain; it reads TTPKPISVVA…LGYKIQLVPV (176 aa). Residue histidine 110 is modified to Pros-8alpha-FAD histidine. N-linked (GlcNAc...) asparagine glycans are attached at residues asparagine 137 and asparagine 293.

Belongs to the oxygen-dependent FAD-linked oxidoreductase family. The cofactor is FAD.

The protein resides in the secreted. It is found in the cell wall. This chain is Berberine bridge enzyme-like 10, found in Arabidopsis thaliana (Mouse-ear cress).